The chain runs to 116 residues: NADPH-dependent 7-cyano-7-deazaguanine reductase (116 aa).

The active-site Thioimide intermediate is cysteine 31. Catalysis depends on aspartate 38, which acts as the Proton donor. Substrate contacts are provided by residues isoleucine 53–leucine 55 and tyrosine 72–glutamate 73.

This sequence belongs to the GTP cyclohydrolase I family. QueF type 1 subfamily.

It is found in the cytoplasm. The catalysed reaction is 7-aminomethyl-7-carbaguanine + 2 NADP(+) = 7-cyano-7-deazaguanine + 2 NADPH + 3 H(+). It functions in the pathway tRNA modification; tRNA-queuosine biosynthesis. In terms of biological role, catalyzes the NADPH-dependent reduction of 7-cyano-7-deazaguanine (preQ0) to 7-aminomethyl-7-deazaguanine (preQ1). The sequence is that of NADPH-dependent 7-cyano-7-deazaguanine reductase from Pelodictyon phaeoclathratiforme (strain DSM 5477 / BU-1).